We begin with the raw amino-acid sequence, 415 residues long: Serine hydroxymethyltransferase (415 aa).

Residues Leu-121 and Gly-125 to Leu-127 contribute to the (6S)-5,6,7,8-tetrahydrofolate site. An N6-(pyridoxal phosphate)lysine modification is found at Lys-230. (6S)-5,6,7,8-tetrahydrofolate is bound by residues Glu-246 and Ser-354–Phe-356.

It belongs to the SHMT family. In terms of assembly, homodimer. Pyridoxal 5'-phosphate is required as a cofactor.

It localises to the cytoplasm. It catalyses the reaction (6R)-5,10-methylene-5,6,7,8-tetrahydrofolate + glycine + H2O = (6S)-5,6,7,8-tetrahydrofolate + L-serine. The protein operates within one-carbon metabolism; tetrahydrofolate interconversion. Its pathway is amino-acid biosynthesis; glycine biosynthesis; glycine from L-serine: step 1/1. Its function is as follows. Catalyzes the reversible interconversion of serine and glycine with tetrahydrofolate (THF) serving as the one-carbon carrier. This reaction serves as the major source of one-carbon groups required for the biosynthesis of purines, thymidylate, methionine, and other important biomolecules. Also exhibits THF-independent aldolase activity toward beta-hydroxyamino acids, producing glycine and aldehydes, via a retro-aldol mechanism. The polypeptide is Serine hydroxymethyltransferase (Bdellovibrio bacteriovorus (strain ATCC 15356 / DSM 50701 / NCIMB 9529 / HD100)).